The following is a 384-amino-acid chain: NADP-dependent alcohol dehydrogenase 3 (384 aa).

This sequence belongs to the iron-containing alcohol dehydrogenase family.

It catalyses the reaction a primary alcohol + NADP(+) = an aldehyde + NADPH + H(+). Functionally, has NADP-dependent alcohol dehydrogenase activity. In Entamoeba histolytica (strain ATCC 30459 / HM-1:IMSS / ABRM), this protein is NADP-dependent alcohol dehydrogenase 3.